The following is a 429-amino-acid chain: Glutamate-1-semialdehyde 2,1-aminomutase (429 aa).

N6-(pyridoxal phosphate)lysine is present on Lys-264.

The protein belongs to the class-III pyridoxal-phosphate-dependent aminotransferase family. HemL subfamily. In terms of assembly, homodimer. Pyridoxal 5'-phosphate serves as cofactor.

The protein resides in the cytoplasm. The enzyme catalyses (S)-4-amino-5-oxopentanoate = 5-aminolevulinate. It participates in porphyrin-containing compound metabolism; protoporphyrin-IX biosynthesis; 5-aminolevulinate from L-glutamyl-tRNA(Glu): step 2/2. The protein is Glutamate-1-semialdehyde 2,1-aminomutase of Campylobacter curvus (strain 525.92).